A 224-amino-acid chain; its full sequence is Heme response regulator HssR (224 aa).

A Response regulatory domain is found at 3–116 (TCLIVDDDPK…ELMFRIKAVL (114 aa)). Aspartate 52 bears the 4-aspartylphosphate mark. A DNA-binding region (ompR/PhoB-type) is located at residues 124–222 (NNEVSIGNLT…VRGLGYKVDD (99 aa)).

In terms of processing, phosphorylated by HssS.

It is found in the cytoplasm. In terms of biological role, member of the two-component regulatory system HssS/HssR involved in intracellular heme homeostasis and tempering of staphylococcal virulence. Phosphorylated HssR binds to a direct repeat sequence within hrtAB promoter and activates the expression of hrtAB, an efflux pump, in response to extracellular heme, hemin, hemoglobin or blood. The sequence is that of Heme response regulator HssR (hssR) from Staphylococcus saprophyticus subsp. saprophyticus (strain ATCC 15305 / DSM 20229 / NCIMB 8711 / NCTC 7292 / S-41).